Reading from the N-terminus, the 103-residue chain is Phosphoribosyl-ATP pyrophosphatase (103 aa).

This sequence belongs to the PRA-PH family.

Its subcellular location is the cytoplasm. The enzyme catalyses 1-(5-phospho-beta-D-ribosyl)-ATP + H2O = 1-(5-phospho-beta-D-ribosyl)-5'-AMP + diphosphate + H(+). It participates in amino-acid biosynthesis; L-histidine biosynthesis; L-histidine from 5-phospho-alpha-D-ribose 1-diphosphate: step 2/9. In Cereibacter sphaeroides (strain ATCC 17029 / ATH 2.4.9) (Rhodobacter sphaeroides), this protein is Phosphoribosyl-ATP pyrophosphatase.